The sequence spans 130 residues: Phosphoribosyl-AMP cyclohydrolase (130 aa).

Asp-78 contributes to the Mg(2+) binding site. Cys-79 serves as a coordination point for Zn(2+). The Mg(2+) site is built by Asp-80 and Asp-82. Positions 96 and 103 each coordinate Zn(2+).

Belongs to the PRA-CH family. In terms of assembly, homodimer. Mg(2+) is required as a cofactor. Zn(2+) serves as cofactor.

Its subcellular location is the cytoplasm. The catalysed reaction is 1-(5-phospho-beta-D-ribosyl)-5'-AMP + H2O = 1-(5-phospho-beta-D-ribosyl)-5-[(5-phospho-beta-D-ribosylamino)methylideneamino]imidazole-4-carboxamide. The protein operates within amino-acid biosynthesis; L-histidine biosynthesis; L-histidine from 5-phospho-alpha-D-ribose 1-diphosphate: step 3/9. Catalyzes the hydrolysis of the adenine ring of phosphoribosyl-AMP. This chain is Phosphoribosyl-AMP cyclohydrolase, found in Methylobacillus flagellatus (strain ATCC 51484 / DSM 6875 / VKM B-1610 / KT).